A 293-amino-acid chain; its full sequence is MHPRFAKPLDTLSAPLKAALLPMLDNDFQARFTPQQVATLKAATGLEDRALRLALLPLAAACSVAPISKFFVGAIACGLSGTWYFGANMEFAGQGLFHSVHAEQSAISNAWLGGETGISEITVNYTPCGHCRQFMNELSTAKTLQVSLPDDLSALQSFLPHSFGPADLDITDALMSPQAHDELVLESEDPIWRAALAAARQSYAPYSQGYAAVALLFADGRLFCGRYAENAAFNPSLPPMQMACAHAVLCGEDLASIRRAVLLESKNGQISQRDSAQSTLKALGSVELEYQAV.

CMP/dCMP-type deaminase domains are found at residues 47-166 (EDRA…FGPA) and 186-293 (ESED…YQAV). 88–90 (NME) contributes to the substrate binding site. His101 lines the Zn(2+) pocket. The active-site Proton donor is the Glu103. Positions 128 and 131 each coordinate Zn(2+).

It belongs to the cytidine and deoxycytidylate deaminase family. As to quaternary structure, homodimer. It depends on Zn(2+) as a cofactor.

It carries out the reaction cytidine + H2O + H(+) = uridine + NH4(+). The enzyme catalyses 2'-deoxycytidine + H2O + H(+) = 2'-deoxyuridine + NH4(+). Its function is as follows. This enzyme scavenges exogenous and endogenous cytidine and 2'-deoxycytidine for UMP synthesis. The sequence is that of Cytidine deaminase from Aeromonas salmonicida (strain A449).